The sequence spans 299 residues: Acetaldehyde dehydrogenase 1 (299 aa).

Cys130 (acyl-thioester intermediate) is an active-site residue. Residues 161–169 (SVGPGTRKN) and Asn272 each bind NAD(+).

This sequence belongs to the acetaldehyde dehydrogenase family.

The catalysed reaction is acetaldehyde + NAD(+) + CoA = acetyl-CoA + NADH + H(+). This Burkholderia cenocepacia (strain ATCC BAA-245 / DSM 16553 / LMG 16656 / NCTC 13227 / J2315 / CF5610) (Burkholderia cepacia (strain J2315)) protein is Acetaldehyde dehydrogenase 1 (mhpF).